A 424-amino-acid chain; its full sequence is Elongation factor 1-alpha (424 aa).

Residues 5–223 (KPHLNLITIG…DAFKVPEKPI (219 aa)) form the tr-type G domain. The tract at residues 14-21 (GHVDHGKS) is G1. 14–21 (GHVDHGKS) provides a ligand contact to GTP. Ser-21 is a binding site for Mg(2+). Residues 70–74 (GVTID) are G2. A G3 region spans residues 91 to 94 (DAPG). GTP-binding positions include 91–95 (DAPGH) and 148–151 (NKMD). Positions 148–151 (NKMD) are G4. The segment at 187–189 (SGY) is G5.

Belongs to the TRAFAC class translation factor GTPase superfamily. Classic translation factor GTPase family. EF-Tu/EF-1A subfamily.

It localises to the cytoplasm. The catalysed reaction is GTP + H2O = GDP + phosphate + H(+). Its function is as follows. GTP hydrolase that promotes the GTP-dependent binding of aminoacyl-tRNA to the A-site of ribosomes during protein biosynthesis. The sequence is that of Elongation factor 1-alpha from Thermoplasma acidophilum (strain ATCC 25905 / DSM 1728 / JCM 9062 / NBRC 15155 / AMRC-C165).